The following is a 251-amino-acid chain: Triosephosphate isomerase (251 aa).

Position 9–11 (9–11 (NWK)) interacts with substrate. Histidine 95 (electrophile) is an active-site residue. Glutamate 167 serves as the catalytic Proton acceptor. Residues glycine 173, serine 212, and 233–234 (GG) contribute to the substrate site.

The protein belongs to the triosephosphate isomerase family. In terms of assembly, homodimer.

The protein localises to the cytoplasm. It catalyses the reaction D-glyceraldehyde 3-phosphate = dihydroxyacetone phosphate. It participates in carbohydrate biosynthesis; gluconeogenesis. The protein operates within carbohydrate degradation; glycolysis; D-glyceraldehyde 3-phosphate from glycerone phosphate: step 1/1. Involved in the gluconeogenesis. Catalyzes stereospecifically the conversion of dihydroxyacetone phosphate (DHAP) to D-glyceraldehyde-3-phosphate (G3P). This Pseudomonas paraeruginosa (strain DSM 24068 / PA7) (Pseudomonas aeruginosa (strain PA7)) protein is Triosephosphate isomerase.